We begin with the raw amino-acid sequence, 483 residues long: Regulatory protein ViaA (483 aa).

The protein belongs to the ViaA family. Homodimer. Interacts with RavA.

It localises to the cytoplasm. Its function is as follows. Component of the RavA-ViaA chaperone complex, which may act on the membrane to optimize the function of some of the respiratory chains. ViaA stimulates the ATPase activity of RavA. In Escherichia coli O1:K1 / APEC, this protein is Regulatory protein ViaA.